The sequence spans 278 residues: HTH-type transcriptional regulator HdfR (278 aa).

An HTH lysR-type domain is found at 1–58 (MDTELLKTFLEVSRTRHFGRAAEALYLTQSAVSFRIRQLENQLGVNLFTRHRNNIRLT). Residues 18–37 (FGRAAEALYLTQSAVSFRIR) constitute a DNA-binding region (H-T-H motif).

This sequence belongs to the LysR transcriptional regulatory family.

Negatively regulates the transcription of the flagellar master operon flhDC by binding to the upstream region of the operon. The chain is HTH-type transcriptional regulator HdfR from Salmonella dublin (strain CT_02021853).